Reading from the N-terminus, the 371-residue chain is RxLR effector protein PITG_12731 (371 aa).

Positions 1 to 24 (MRFYSVLLTIVTLIASTYDAKVNA) are cleaved as a signal peptide. The RxLR-dEER signature appears at 43–53 (RMLRADHADER).

The protein belongs to the RxLR effector family.

The protein resides in the secreted. It localises to the host nucleus. It is found in the host cytoplasm. Effector that enhances P.infestans colonization of Nicotiana benthamiana leaves. The sequence is that of RxLR effector protein PITG_12731 from Phytophthora infestans (strain T30-4) (Potato late blight agent).